A 352-amino-acid polypeptide reads, in one-letter code: MEKYEKIGKIGEGSYGVVFKCRNRDTGQIVAIKRFLETEDDPVIKKIALREIRMLKQLKHPNLVNLLEVFRRKRRLHLVFEYCDHTVLHELDRYQRGVPEPLVKNITWQTLQAVNFCHKHNCIHRDVKPENILITKQSAIKLCDFGFARLLTGPGDYYTDYVATRWYRSPELLVGDTQYGPPVDVWAIGCVFAELLSGVPLWPGKSDVDQLYLIRKTLGDLIPRHQQVFSMNQYFSGVKIPDPEDMETLELKFPNISYSALGFLKGCLHMDPAERLTCEQLLQHPYFDSIREVGELTRQHDKPARKTLRQSRKHLTGLQYLPQLTSSRILPALDNKKYHCSTKRFNYHFPNI.

Residues 4–287 (YEKIGKIGEG…CEQLLQHPYF (284 aa)) enclose the Protein kinase domain. ATP contacts are provided by residues 10–18 (IGEGSYGVV) and K33. A [NKR]KIAxRE motif is present at residues 45–51 (KKIALRE). D126 acts as the Proton acceptor in catalysis.

It belongs to the protein kinase superfamily. CMGC Ser/Thr protein kinase family. CDC2/CDKX subfamily.

Its subcellular location is the cytoplasm. The protein localises to the nucleus. The catalysed reaction is L-seryl-[protein] + ATP = O-phospho-L-seryl-[protein] + ADP + H(+). It catalyses the reaction L-threonyl-[protein] + ATP = O-phospho-L-threonyl-[protein] + ADP + H(+). The polypeptide is Cyclin-dependent kinase-like 1 (Mus musculus (Mouse)).